A 343-amino-acid chain; its full sequence is MDFDKSSSSLVLDLAWNQVDKKNQDFIYAKDFPALIMSIEEILSRGQQTPLAFLSNTGKSVIDTFAREKEFFKIYRDEFKEIFHGLVGKTFKDTIEGTNVSRSVLDEQGQEPDVSTTPTRQQRSSPRKVNRLLKNLETRVASMKDELKFKDEILAEKDRELIQLTRKLSDYKDKYEFVQRQFSFYKDHGESPRRNSSESEQLNLEQNASTKHEFIISELKRKLQEQTLAISNLKEQLQRGEGAGVLYTNYSKRYNPLHNDGPMVLVLATLVFLTIILLIGSMIWVTGGKDDSNSFSQYSWWENNSLLSRIGWFFRDWSDTGVDYVNFEPSSDAYERIMGIRRI.

2 disordered regions span residues 102–129 (RSVL…PRKV) and 187–206 (DHGE…NLEQ). Residues 113–124 (DVSTTPTRQQRS) show a composition bias toward polar residues. Positions 127–243 (RKVNRLLKNL…KEQLQRGEGA (117 aa)) form a coiled coil. Positions 187–197 (DHGESPRRNSS) are enriched in basic and acidic residues. A helical membrane pass occupies residues 264–284 (VLVLATLVFLTIILLIGSMIW).

The protein belongs to the MPS2 family.

The protein localises to the nucleus membrane. It localises to the cytoplasm. The protein resides in the cytoskeleton. Its subcellular location is the microtubule organizing center. It is found in the spindle pole body. In terms of biological role, component of the spindle pole body (SPB) required for insertion of the nascent SPB into the nuclear envelope and for the proper execution of spindle pole body (SPB) duplication. The polypeptide is Monopolar spindle protein 2 (MPS2) (Zygosaccharomyces rouxii (strain ATCC 2623 / CBS 732 / NBRC 1130 / NCYC 568 / NRRL Y-229)).